Consider the following 292-residue polypeptide: Malectin (292 aa).

The first 28 residues, 1 to 28, serve as a signal peptide directing secretion; that stretch reads MLGAWAVEGTAVALLRLLLLLLPPAIRG. At 29–269 the chain is on the lumenal side; that stretch reads PGLGVAGVAG…TPNPYASDNS (241 aa). A carbohydrate is bound by residues Y82, Y104, Y131, F132, and D201. The disordered stretch occupies residues 221–265; that stretch reads LQPHPGLEKKEEEEEEEEYDEGSNLKKQTNKNRVQSGPRTPNPYA. Over residues 231 to 241 the composition is skewed to acidic residues; that stretch reads EEEEEEEEYDE. Polar residues predominate over residues 245 to 265; sequence LKKQTNKNRVQSGPRTPNPYA. Residue N268 is glycosylated (N-linked (GlcNAc...) asparagine). Residues 270-290 form a helical membrane-spanning segment; the sequence is SLMFPILVAFGVFIPTLFCLC. Topologically, residues 291 to 292 are cytoplasmic; sequence RL.

This sequence belongs to the malectin family. In terms of assembly, interacts with the oligosaccharyltransferase (OST) complex.

The protein resides in the endoplasmic reticulum membrane. In terms of biological role, carbohydrate-binding protein with a strong ligand preference for Glc2-N-glycan. May play a role in the early steps of protein N-glycosylation. This is Malectin from Homo sapiens (Human).